The sequence spans 622 residues: 1-deoxy-D-xylulose-5-phosphate synthase (622 aa).

Residues histidine 80 and 121 to 123 contribute to the thiamine diphosphate site; that span reads GHS. Aspartate 152 is a Mg(2+) binding site. Thiamine diphosphate is bound by residues 153 to 154, asparagine 181, tyrosine 288, and glutamate 370; that span reads GA. Asparagine 181 contributes to the Mg(2+) binding site.

The protein belongs to the transketolase family. DXPS subfamily. As to quaternary structure, homodimer. Requires Mg(2+) as cofactor. Thiamine diphosphate is required as a cofactor.

It carries out the reaction D-glyceraldehyde 3-phosphate + pyruvate + H(+) = 1-deoxy-D-xylulose 5-phosphate + CO2. It functions in the pathway metabolic intermediate biosynthesis; 1-deoxy-D-xylulose 5-phosphate biosynthesis; 1-deoxy-D-xylulose 5-phosphate from D-glyceraldehyde 3-phosphate and pyruvate: step 1/1. In terms of biological role, catalyzes the acyloin condensation reaction between C atoms 2 and 3 of pyruvate and glyceraldehyde 3-phosphate to yield 1-deoxy-D-xylulose-5-phosphate (DXP). The chain is 1-deoxy-D-xylulose-5-phosphate synthase from Shewanella baltica (strain OS185).